Reading from the N-terminus, the 184-residue chain is METIEVLVGRIGKPHGIRGELTLDVRTDEPERRFAPGAVLRAEPPAGSASRLRRVTVRSARWHQSTLLVAFEEVADRTAAEAARGILLHATVPADAAPDDPDEYYDHQLVGLAAYDVSGAALGSVTGLVHGGAQDLLTVRTPDGRDALVPFVKALVPEVDLAGRRVVIADRPGLVTPLPEDDEH.

The 74-residue stretch at 101–174 folds into the PRC barrel domain; it reads PDEYYDHQLV…RVVIADRPGL (74 aa).

It belongs to the RimM family. In terms of assembly, binds ribosomal protein uS19.

The protein localises to the cytoplasm. Functionally, an accessory protein needed during the final step in the assembly of 30S ribosomal subunit, possibly for assembly of the head region. Essential for efficient processing of 16S rRNA. May be needed both before and after RbfA during the maturation of 16S rRNA. It has affinity for free ribosomal 30S subunits but not for 70S ribosomes. The polypeptide is Ribosome maturation factor RimM (Nocardioides sp. (strain ATCC BAA-499 / JS614)).